Reading from the N-terminus, the 196-residue chain is Carnitine operon protein CaiE (196 aa).

The tract at residues 173-196 (TQPLRQMEENRPRLQGTTDVTPKR) is disordered. Polar residues predominate over residues 187 to 196 (QGTTDVTPKR).

The protein belongs to the transferase hexapeptide repeat family.

The protein operates within amine and polyamine metabolism; carnitine metabolism. Overproduction of CaiE stimulates the activity of CaiB and CaiD. This chain is Carnitine operon protein CaiE, found in Escherichia coli O127:H6 (strain E2348/69 / EPEC).